We begin with the raw amino-acid sequence, 630 residues long: uncharacterized protein (630 aa).

4 helical membrane passes run 254-274 (MFYA…ELRV), 504-524 (IALL…LTSI), 564-584 (MIFA…SMVF), and 601-621 (IIVI…AVLF).

Its subcellular location is the cell membrane. This is an uncharacterized protein from Mycoplasma genitalium (strain ATCC 33530 / DSM 19775 / NCTC 10195 / G37) (Mycoplasmoides genitalium).